Here is a 252-residue protein sequence, read N- to C-terminus: Imidazole glycerol phosphate synthase subunit HisF (252 aa).

Residues D11 and D130 contribute to the active site.

This sequence belongs to the HisA/HisF family. In terms of assembly, heterodimer of HisH and HisF.

The protein localises to the cytoplasm. It catalyses the reaction 5-[(5-phospho-1-deoxy-D-ribulos-1-ylimino)methylamino]-1-(5-phospho-beta-D-ribosyl)imidazole-4-carboxamide + L-glutamine = D-erythro-1-(imidazol-4-yl)glycerol 3-phosphate + 5-amino-1-(5-phospho-beta-D-ribosyl)imidazole-4-carboxamide + L-glutamate + H(+). It participates in amino-acid biosynthesis; L-histidine biosynthesis; L-histidine from 5-phospho-alpha-D-ribose 1-diphosphate: step 5/9. Functionally, IGPS catalyzes the conversion of PRFAR and glutamine to IGP, AICAR and glutamate. The HisF subunit catalyzes the cyclization activity that produces IGP and AICAR from PRFAR using the ammonia provided by the HisH subunit. The sequence is that of Imidazole glycerol phosphate synthase subunit HisF from Paramagnetospirillum magneticum (strain ATCC 700264 / AMB-1) (Magnetospirillum magneticum).